The chain runs to 617 residues: Cytoplasmic polyadenylation element-binding protein 1 (617 aa).

The tract at residues M1 to G38 is disordered. 2 RRM domains span residues R273–L377 and R394–T465. 2 disordered regions span residues D534–T568 and N592–Y617. Over residues P542–T563 the composition is skewed to basic residues.

In terms of assembly, interacts with fbf-1.

Cytoplasmic polyadenylation element binding protein that binds to and regulates the translation of specific mRNAs. Essential for progression through meiosis. Involved in spermatogenesis. This chain is Cytoplasmic polyadenylation element-binding protein 1 (cpb-1), found in Caenorhabditis japonica.